Reading from the N-terminus, the 221-residue chain is Probable nicotinate-nucleotide adenylyltransferase (221 aa).

It belongs to the NadD family.

The enzyme catalyses nicotinate beta-D-ribonucleotide + ATP + H(+) = deamido-NAD(+) + diphosphate. Its pathway is cofactor biosynthesis; NAD(+) biosynthesis; deamido-NAD(+) from nicotinate D-ribonucleotide: step 1/1. Functionally, catalyzes the reversible adenylation of nicotinate mononucleotide (NaMN) to nicotinic acid adenine dinucleotide (NaAD). This is Probable nicotinate-nucleotide adenylyltransferase from Marinomonas sp. (strain MWYL1).